Reading from the N-terminus, the 246-residue chain is Histone H1 (246 aa).

2 disordered regions span residues 1-51 (MATD…PTHL) and 105-246 (GGKL…KAKK). Residues 9-34 (PAPLVDAAPEAPADAPAAPAADANAA) show a composition bias toward low complexity. Positions 35–47 (KAKKATAPKKRAS) are enriched in basic residues. An H15 domain is found at 49-119 (THLPYAEMVS…KVKNSYKLSS (71 aa)). Basic residues-rich tracts occupy residues 129 to 189 (AAPK…KAKP) and 198 to 208 (PLAKKAGRAKA). Over residues 224–235 (KKAAPSKKAATP) the composition is skewed to low complexity.

Belongs to the histone H1/H5 family.

The protein resides in the nucleus. It localises to the chromosome. Histones H1 are necessary for the condensation of nucleosome chains into higher-order structures. The sequence is that of Histone H1 from Zea mays (Maize).